Reading from the N-terminus, the 67-residue chain is Large ribosomal subunit protein bL35 (67 aa).

Residues 1–16 (MPKMKTKSGAKKRFRV) are compositionally biased toward basic residues. A disordered region spans residues 1 to 24 (MPKMKTKSGAKKRFRVRPGGTVKR).

It belongs to the bacterial ribosomal protein bL35 family.

The polypeptide is Large ribosomal subunit protein bL35 (Polaromonas naphthalenivorans (strain CJ2)).